Reading from the N-terminus, the 589-residue chain is Ectoderm-neural cortex protein 1 (589 aa).

Positions 46-114 (TDVLLHAGNR…AYSSRVIINE (69 aa)) constitute a BTB domain. Kelch repeat units follow at residues 296–340 (ALFL…AIGC), 341–388 (KVYI…ELKH), 389–444 (CLYV…SAKL), 446–492 (LFAF…VLGN), 494–538 (IFIM…ASGN), and 539–585 (KLYV…STWK).

In terms of assembly, binds to RB1. Hypophosphorylated RB1 associates with ENC1 during neuronal differentiation, while hyperphosphorylated RB1 associates with ENC1 in undifferentiating cells. Part of a complex that contains CUL3, RBX1 and ENC1. Interacts indirectly with KEAP1. Ubiquitinated by E3 ubiquitin ligase complex formed by CUL3 and RBX1 and probably targeted for proteasome-independent degradation. Quinone-induced oxidative stress increases its ubiquitination. As to expression, primarily expressed in the nervous system.

It localises to the nucleus matrix. The protein localises to the cytoplasm. Its subcellular location is the cytoskeleton. In terms of biological role, actin-binding protein involved in the regulation of neuronal process formation and in differentiation of neural crest cells. Down-regulates transcription factor NF2L2/NRF2 by decreasing the rate of protein synthesis and not via a ubiquitin-mediated proteasomal degradation mechanism. In Mus musculus (Mouse), this protein is Ectoderm-neural cortex protein 1 (Enc1).